The sequence spans 354 residues: Probable serine acetyltransferase 2 (354 aa).

It belongs to the transferase hexapeptide repeat family. As to quaternary structure, homomultimer.

It catalyses the reaction L-serine + acetyl-CoA = O-acetyl-L-serine + CoA. Its pathway is amino-acid biosynthesis; L-cysteine biosynthesis; L-cysteine from L-serine: step 1/2. This chain is Probable serine acetyltransferase 2 (SAT2), found in Oryza sativa subsp. japonica (Rice).